The sequence spans 601 residues: Sodium-dependent phosphate transport protein 2C (601 aa).

Residues 1–75 (MPNSLAGDQV…HQVVSGFLKA (75 aa)) lie on the Cytoplasmic side of the membrane. At Ser4 the chain carries Phosphoserine. Residues 76–96 (CGLLGSLYFFICSLDILSSAF) traverse the membrane as a helical segment. The Extracellular segment spans residues 97–110 (QLLGSKMAGDIFKD). A helical transmembrane segment spans residues 111 to 131 (NVVLSNPVAGLVIGVVVTVLV). Over 132–187 (QSSSTSSSIVVSMVASKSLTVQASVPIIMGVNVGTSITSTLVSMAQSGDRDEFQRA) the chain is Cytoplasmic. The helical transmembrane segment at 188 to 208 (FGGSAVHGIFNWLTVLVLLPL) threads the bilayer. The Extracellular segment spans residues 209-324 (ENATAALERL…FAGSELTDLA (116 aa)). Asn210, Asn264, Asn267, and Asn299 each carry an N-linked (GlcNAc...) asparagine glycan. A disulfide bond links Cys275 and Cys311. A helical membrane pass occupies residues 325 to 345 (VGFILLAGSLLVLCVCLVLIV). Over 346–369 (KLLNSVLRGRIAQAVKTVINADFP) the chain is Cytoplasmic. A helical transmembrane segment spans residues 370 to 390 (FPFGWLSGYLAILVGAGLTFL). Topologically, residues 391–447 (LQSSSVFTAAIVPLMGVGVINLERAYPLFLGSNIGTTTTALLAALASPADTLLFAVQ) are extracellular. The chain crosses the membrane as a helical span at residues 448–468 (VALIHFFFNLAGILLWYLVPV). The Cytoplasmic segment spans residues 469–487 (LRLPIPLAKRFGDLTAQYR). The chain crosses the membrane as a helical span at residues 488 to 508 (WVAIVYLLLTFLLLPLAAFGL). At 509–512 (SLAG) the chain is on the extracellular side. Residues 513–533 (GSVLAAVGGPLVGLVLLIILV) form a helical membrane-spanning segment. The Cytoplasmic portion of the chain corresponds to 534–601 (NVLQRHRPSW…NPQVIASQQL (68 aa)).

This sequence belongs to the SLC34A transporter family. In terms of tissue distribution, highly expressed in the kidney. Not found in any of the other tested tissues.

The protein resides in the apical cell membrane. The enzyme catalyses 2 Na(+)(out) + phosphate(out) = 2 Na(+)(in) + phosphate(in). Functionally, involved in actively transporting phosphate into cells via Na(+) cotransport in the renal brush border membrane. The cotransport has a Na(+):Pi stoichiometry of 2:1 and is electroneutral. The sequence is that of Sodium-dependent phosphate transport protein 2C (Slc34a3) from Rattus norvegicus (Rat).